The sequence spans 251 residues: 1-(5-phosphoribosyl)-5-[(5-phosphoribosylamino)methylideneamino] imidazole-4-carboxamide isomerase (251 aa).

Residue aspartate 8 is the Proton acceptor of the active site. Aspartate 131 functions as the Proton donor in the catalytic mechanism.

The protein belongs to the HisA/HisF family.

Its subcellular location is the cytoplasm. The enzyme catalyses 1-(5-phospho-beta-D-ribosyl)-5-[(5-phospho-beta-D-ribosylamino)methylideneamino]imidazole-4-carboxamide = 5-[(5-phospho-1-deoxy-D-ribulos-1-ylimino)methylamino]-1-(5-phospho-beta-D-ribosyl)imidazole-4-carboxamide. Its pathway is amino-acid biosynthesis; L-histidine biosynthesis; L-histidine from 5-phospho-alpha-D-ribose 1-diphosphate: step 4/9. In Thiobacillus denitrificans (strain ATCC 25259 / T1), this protein is 1-(5-phosphoribosyl)-5-[(5-phosphoribosylamino)methylideneamino] imidazole-4-carboxamide isomerase.